The chain runs to 349 residues: Ferredoxin--NADP reductase 1 (349 aa).

Residues E36, K44, Y48, I88, L123, D290, and S331 each coordinate FAD.

This sequence belongs to the ferredoxin--NADP reductase type 2 family. As to quaternary structure, homodimer. Requires FAD as cofactor.

It catalyses the reaction 2 reduced [2Fe-2S]-[ferredoxin] + NADP(+) + H(+) = 2 oxidized [2Fe-2S]-[ferredoxin] + NADPH. The polypeptide is Ferredoxin--NADP reductase 1 (Bacillus thuringiensis (strain Al Hakam)).